We begin with the raw amino-acid sequence, 307 residues long: High-affinity branched-chain amino acid transport system permease protein BraD (307 aa).

10 consecutive transmembrane segments (helical) span residues 21 to 41 (YALI…INFA), 45 to 65 (VYMI…MMGL), 70 to 90 (LMML…GYSI), 104 to 124 (LIPL…VMLS), 132 to 152 (IPTL…GVVI), 154 to 174 (YMQI…TLFI), 203 to 223 (IIAL…VLLG), 224 to 244 (MQYG…AFTA), 245 to 265 (AVLG…LLGV), and 280 to 300 (DVVA…GILG).

It belongs to the binding-protein-dependent transport system permease family. LivHM subfamily.

Its subcellular location is the cell inner membrane. Functionally, component of the high affinity leucine, isoleucine, valine, transport system (LIV-I), which is operative without Na(+) and is specific for alanine and threonine, in addition to branched-chain amino acids. This is High-affinity branched-chain amino acid transport system permease protein BraD (braD) from Pseudomonas aeruginosa (strain ATCC 15692 / DSM 22644 / CIP 104116 / JCM 14847 / LMG 12228 / 1C / PRS 101 / PAO1).